Consider the following 280-residue polypeptide: 4-deoxy-L-threo-5-hexosulose-uronate ketol-isomerase (280 aa).

Zn(2+) contacts are provided by H198, H200, E205, and H247.

The protein belongs to the KduI family. The cofactor is Zn(2+).

The protein localises to the cytoplasm. It carries out the reaction 5-dehydro-4-deoxy-D-glucuronate = 3-deoxy-D-glycero-2,5-hexodiulosonate. Functionally, isomerase involved in ulvan degradation. Ulvan is the main polysaccharide component of the Ulvales (green seaweed) cell wall. It is composed of disaccharide building blocks comprising 3-sulfated rhamnose (Rha3S) linked to D-glucuronic acid (GlcA), L-iduronic acid (IduA), or D-xylose (Xyl). Catalyzes the isomerization of 5-dehydro-4-deoxy-D-glucuronate to 3-deoxy-D-glycero-2,5-hexodiulosonate. In Formosa agariphila (strain DSM 15362 / KCTC 12365 / LMG 23005 / KMM 3901 / M-2Alg 35-1), this protein is 4-deoxy-L-threo-5-hexosulose-uronate ketol-isomerase.